Consider the following 227-residue polypeptide: Orotate phosphoribosyltransferase (227 aa).

5-phospho-alpha-D-ribose 1-diphosphate contacts are provided by K51, R119, K120, and K123. Orotate-binding residues include T149 and R177.

Belongs to the purine/pyrimidine phosphoribosyltransferase family. PyrE subfamily. In terms of assembly, homodimer. As to expression, expressed in body wall muscles, spermatheca and vulva muscles.

The enzyme catalyses orotidine 5'-phosphate + diphosphate = orotate + 5-phospho-alpha-D-ribose 1-diphosphate. It carries out the reaction UMP + diphosphate = 5-phospho-alpha-D-ribose 1-diphosphate + uracil. It participates in pyrimidine metabolism; UMP biosynthesis via de novo pathway; UMP from orotate: step 1/2. The protein operates within pyrimidine metabolism; UMP biosynthesis via salvage pathway; UMP from uracil: step 1/1. Functionally, phosphoribosyltransferase which catalyzes the formation of UMP from uracil in vitro and thus may be involved in UMP biosynthesis via the salvage pathway. May also participate in the first step of UMP synthesis by catalyzing the formation of orotidine 5'-phosphate, a UMP precursor, from orotate. In Caenorhabditis elegans, this protein is Orotate phosphoribosyltransferase.